The sequence spans 862 residues: Cell surface glycoprotein (862 aa).

Positions 1–34 are cleaved as a signal peptide; sequence MTDTQQKIKAVLLTVLMVTSVFAATIAFSGAAAA. Disordered regions lie at residues 35–60, 101–126, and 200–220; these read SERG…SAGN, ILLE…EGTE, and VNTN…DRDD. Positions 43 to 57 are enriched in polar residues; it reads YTTGPTDGNQDNVDS. A compositionally biased stretch (basic and acidic residues) spans 206–220; sequence NDDHPNPAADGDRDD. Asparagine 442, asparagine 520, asparagine 550, asparagine 702, and asparagine 761 each carry an N-linked (GlcNAc...) asparagine glycan. The disordered stretch occupies residues 752 to 838; sequence LSDENVEPGN…TEEATTEATG (87 aa). A compositionally biased stretch (acidic residues) spans 784–801; it reads SLEEEQPATDTPEPDTDT. Positions 802 to 815 are enriched in low complexity; sequence PEPATDTPEPATDT. Residues 816-833 are compositionally biased toward acidic residues; the sequence is PEPDTDTPEPDTETEEAT. A helical membrane pass occupies residues 838 to 858; that stretch reads GPGFTAAIALIALVAAALLAV. Positions 839-841 match the PGF sorting signal motif; it reads PGF.

Belongs to the halobacterial S-layer protein family. In terms of processing, glycosylated. Cleaved by the archaeosortase ArtA at the C-terminus, with removal of a short hydrophobic segment. Post-translationally, lipidation.

Its subcellular location is the secreted. It is found in the cell wall. It localises to the S-layer. The protein resides in the cell membrane. Functionally, S-layer protein. The S-layer is a paracrystalline mono-layered assembly of proteins which coat the surface of the cell. The protein is Cell surface glycoprotein of Haloarcula japonica (strain ATCC 49778 / DSM 6131 / JCM 7785 / NBRC 101032 / NCIMB 13157 / TR-1).